Consider the following 82-residue polypeptide: Large ribosomal subunit protein bL31B (82 aa).

This sequence belongs to the bacterial ribosomal protein bL31 family. Type B subfamily. Part of the 50S ribosomal subunit after the end of exponential growth.

Its function is as follows. While neither of the L31 paralogs is essential, this protein does not seem to function as the main L31 protein. Has a higher affinity for 70S ribosomes than the zinc-containing L31 paralog; is able to displace it to varying extents, even under zinc-replete conditions. The chain is Large ribosomal subunit protein bL31B (rpmE2) from Bacillus subtilis (strain 168).